The sequence spans 525 residues: Mitogen-activated protein kinase kinase 5 (525 aa).

The 259-residue stretch at 59 to 317 (ETEGGFLGKG…CTELLRHPFI (259 aa)) folds into the Protein kinase domain. Residues 65–73 (LGKGSSGSV) and lysine 88 contribute to the ATP site. The active-site Proton acceptor is the aspartate 178. Positions 358 to 367 (SALPLASEGG) are enriched in low complexity. Disordered stretches follow at residues 358 to 392 (SALP…ERHD) and 438 to 468 (SASV…AQHR).

It belongs to the protein kinase superfamily. STE Ser/Thr protein kinase family. MAP kinase kinase subfamily. Mg(2+) serves as cofactor.

It carries out the reaction L-tyrosyl-[protein] + ATP = O-phospho-L-tyrosyl-[protein] + ADP + H(+). The enzyme catalyses L-seryl-[protein] + ATP = O-phospho-L-seryl-[protein] + ADP + H(+). It catalyses the reaction L-threonyl-[protein] + ATP = O-phospho-L-threonyl-[protein] + ADP + H(+). Its function is as follows. Protein kinase which phosphorylates and activates MPK4 in vitro. This is Mitogen-activated protein kinase kinase 5 from Leishmania mexicana.